The following is a 244-amino-acid chain: Small ribosomal subunit protein uS2 (244 aa).

This sequence belongs to the universal ribosomal protein uS2 family.

This chain is Small ribosomal subunit protein uS2, found in Halalkalibacterium halodurans (strain ATCC BAA-125 / DSM 18197 / FERM 7344 / JCM 9153 / C-125) (Bacillus halodurans).